We begin with the raw amino-acid sequence, 139 residues long: D-ribose pyranase (139 aa).

The active-site Proton donor is histidine 20. Residues aspartate 28, histidine 106, and 128–130 contribute to the substrate site; that span reads YAN.

The protein belongs to the RbsD / FucU family. RbsD subfamily. In terms of assembly, homodecamer.

It is found in the cytoplasm. The catalysed reaction is beta-D-ribopyranose = beta-D-ribofuranose. The protein operates within carbohydrate metabolism; D-ribose degradation; D-ribose 5-phosphate from beta-D-ribopyranose: step 1/2. In terms of biological role, catalyzes the interconversion of beta-pyran and beta-furan forms of D-ribose. This Escherichia coli O6:H1 (strain CFT073 / ATCC 700928 / UPEC) protein is D-ribose pyranase.